Here is a 108-residue protein sequence, read N- to C-terminus: Peptidyl-prolyl cis-trans isomerase FKBP1B (108 aa).

The PPIase FKBP-type domain maps to 20 to 108; sequence GQICVVHYTG…IFDVELLSLE (89 aa).

This sequence belongs to the FKBP-type PPIase family. FKBP1 subfamily. As to quaternary structure, identified in a complex composed of RYR2, FKBP1B, PKA catalytic subunit, PRKAR2A, AKAP6, and the protein phosphatases PP2A and PP1. Interacts directly with RYR2.

The protein resides in the cytoplasm. The protein localises to the sarcoplasmic reticulum. It carries out the reaction [protein]-peptidylproline (omega=180) = [protein]-peptidylproline (omega=0). Inhibited by both FK506 and rapamycin. Has the potential to contribute to the immunosuppressive and toxic effects of FK506 and rapamycin. PPIases accelerate the folding of proteins. It catalyzes the cis-trans isomerization of proline imidic peptide bonds in oligopeptides. The chain is Peptidyl-prolyl cis-trans isomerase FKBP1B (Fkbp1b) from Mus musculus (Mouse).